The following is a 1270-amino-acid chain: Myosin-binding protein C, cardiac-type (1270 aa).

An N-acetylmethionine modification is found at Met1. The disordered stretch occupies residues 1–24 (MPEPGKKPVSAFNKKPRSAEVTAG). Phosphoserine is present on residues Ser47 and Ser72. Residues 94–105 (VTEPAPPEKAES) are compositionally biased toward basic and acidic residues. Positions 94 to 152 (VTEPAPPEKAESEVAPGAPEEVPAPATELEESVSSPEGSVSVTQDGSAAEHQGAPDDPI) are disordered. The span at 106 to 135 (EVAPGAPEEVPAPATELEESVSSPEGSVSV) shows a compositional bias: low complexity. In terms of domain architecture, Ig-like C2-type 1 spans 151–254 (PIGLFLMRPQ…FDSCNFNLTV (104 aa)). Residues Gln206, His208, Glu221, and His223 each coordinate Zn(2+). Phosphoserine; by PKA and PKC occurs at positions 273, 282, and 302. Phosphoserine is present on residues Ser307 and Ser423. Ig-like C2-type domains are found at residues 358 to 448 (STAF…VKEP), 449 to 539 (PVLI…VQEK), 540 to 629 (KLEV…HFME), and 641 to 767 (PKIH…VIDV). Cys432 and Cys439 form a disulfide bridge. A phosphoserine mark is found at Ser455 and Ser546. Thr603 is subject to Phosphothreonine. The interval 683–702 (VTQGKKASAGPHPDAPEDAG) is disordered. 2 consecutive Fibronectin type-III domains span residues 770–866 (APAA…IGPP) and 868–963 (EPTH…VQEI). In terms of domain architecture, Ig-like C2-type 6 spans 967-1061 (PRLQLPRHLR…ATLILQIVDK (95 aa)). The 96-residue stretch at 1064-1159 (PPQDIRIVET…TKEPVFIPRP (96 aa)) folds into the Fibronectin type-III 3 domain. Residues 1177 to 1270 (PSFTQPLANR…ECRLEVRVPQ (94 aa)) enclose the Ig-like C2-type 7 domain. Arg1237 is subject to Omega-N-methylarginine.

It belongs to the immunoglobulin superfamily. MyBP family. Post-translationally, substrate for phosphorylation by PKA and PKC. Reversible phosphorylation appears to modulate contraction. Polyubiquitinated.

In terms of biological role, thick filament-associated protein located in the crossbridge region of vertebrate striated muscle a bands. In vitro it binds MHC, F-actin and native thin filaments, and modifies the activity of actin-activated myosin ATPase. It may modulate muscle contraction or may play a more structural role. The chain is Myosin-binding protein C, cardiac-type (Mybpc3) from Mus musculus (Mouse).